Here is a 393-residue protein sequence, read N- to C-terminus: Bifunctional enzyme Fae/Hps (393 aa).

Positions 1–161 are formaldehyde-activating enzyme; it reads MYQIGEALVG…YEKDRGAHAV (161 aa). The active-site Proton donor is the H17. 5 residues coordinate substrate: D19, L48, K66, T68, and Q83. The interval 162–393 is 3-hexulose-6-phosphate synthase; the sequence is MGFKVQRLWD…IDQFRVMTDF (232 aa).

In the N-terminal section; belongs to the formaldehyde-activating enzyme family. It in the C-terminal section; belongs to the HPS/KGPDC family. HPS subfamily.

It carries out the reaction 5,6,7,8-tetrahydromethanopterin + formaldehyde = 5,10-methylenetetrahydromethanopterin + H2O. It catalyses the reaction D-ribulose 5-phosphate + formaldehyde = D-arabino-hex-3-ulose 6-phosphate. The protein operates within carbohydrate biosynthesis; D-ribose 5-phosphate biosynthesis. Functionally, catalyzes the condensation of formaldehyde with tetrahydromethanopterin (H(4)MPT) to 5,10-methylenetetrahydromethanopterin. Catalyzes the reversible formation of ribulose-5-phosphate and formaldehyde from 3-hexulose-6-phosphate. The protein is Bifunctional enzyme Fae/Hps of Methanosphaerula palustris (strain ATCC BAA-1556 / DSM 19958 / E1-9c).